The following is a 405-amino-acid chain: L-carnitine CoA-transferase (405 aa).

2 residues coordinate CoA: lysine 97 and arginine 104. The active-site Nucleophile is aspartate 169.

The protein belongs to the CoA-transferase III family. CaiB subfamily. In terms of assembly, homodimer.

The protein resides in the cytoplasm. The catalysed reaction is crotonobetainyl-CoA + (R)-carnitine = crotonobetaine + (R)-carnitinyl-CoA. The enzyme catalyses 4-(trimethylamino)butanoyl-CoA + (R)-carnitine = (R)-carnitinyl-CoA + 4-(trimethylamino)butanoate. The protein operates within amine and polyamine metabolism; carnitine metabolism. Functionally, catalyzes the reversible transfer of the CoA moiety from gamma-butyrobetainyl-CoA to L-carnitine to generate L-carnitinyl-CoA and gamma-butyrobetaine. Is also able to catalyze the reversible transfer of the CoA moiety from gamma-butyrobetainyl-CoA or L-carnitinyl-CoA to crotonobetaine to generate crotonobetainyl-CoA. This chain is L-carnitine CoA-transferase, found in Salmonella choleraesuis (strain SC-B67).